A 186-amino-acid chain; its full sequence is Peptide deformylase (186 aa).

Residues cysteine 94 and histidine 136 each coordinate Fe cation. Glutamate 137 is a catalytic residue. Histidine 140 contributes to the Fe cation binding site.

Belongs to the polypeptide deformylase family. Fe(2+) is required as a cofactor.

The catalysed reaction is N-terminal N-formyl-L-methionyl-[peptide] + H2O = N-terminal L-methionyl-[peptide] + formate. Removes the formyl group from the N-terminal Met of newly synthesized proteins. Requires at least a dipeptide for an efficient rate of reaction. N-terminal L-methionine is a prerequisite for activity but the enzyme has broad specificity at other positions. The sequence is that of Peptide deformylase from Prosthecochloris aestuarii (strain DSM 271 / SK 413).